A 159-amino-acid chain; its full sequence is Probable cyclic pyranopterin monophosphate synthase accessory protein (159 aa).

Aspartate 128 is a catalytic residue.

It belongs to the MoaC family.

It functions in the pathway cofactor biosynthesis; molybdopterin biosynthesis. Functionally, together with MoaA, is involved in the conversion of 5'-GTP to cyclic pyranopterin monophosphate (cPMP or molybdopterin precursor Z). The protein is Probable cyclic pyranopterin monophosphate synthase accessory protein of Methanothermobacter thermautotrophicus (strain ATCC 29096 / DSM 1053 / JCM 10044 / NBRC 100330 / Delta H) (Methanobacterium thermoautotrophicum).